A 229-amino-acid polypeptide reads, in one-letter code: Cytidylate kinase (229 aa).

10 to 18 (GYSSCGKST) contacts ATP.

This sequence belongs to the cytidylate kinase family. Type 1 subfamily.

The protein resides in the cytoplasm. The catalysed reaction is CMP + ATP = CDP + ADP. It carries out the reaction dCMP + ATP = dCDP + ADP. The chain is Cytidylate kinase from Phocaeicola vulgatus (strain ATCC 8482 / DSM 1447 / JCM 5826 / CCUG 4940 / NBRC 14291 / NCTC 11154) (Bacteroides vulgatus).